A 222-amino-acid chain; its full sequence is Probable GTP-binding protein EngB (222 aa).

An EngB-type G domain is found at 25–199 (AGVEVAFAGR…SQLLQNWFDT (175 aa)). GTP is bound by residues 33-40 (GRSNAGKS), 60-64 (GRTQH), 78-81 (DLPG), 145-148 (TKAD), and 178-180 (FSS). Mg(2+) is bound by residues serine 40 and threonine 62.

It belongs to the TRAFAC class TrmE-Era-EngA-EngB-Septin-like GTPase superfamily. EngB GTPase family. Mg(2+) serves as cofactor.

Functionally, necessary for normal cell division and for the maintenance of normal septation. The protein is Probable GTP-binding protein EngB of Nitrosomonas europaea (strain ATCC 19718 / CIP 103999 / KCTC 2705 / NBRC 14298).